We begin with the raw amino-acid sequence, 568 residues long: Putative F-box protein At5g39480 (568 aa).

The 47-residue stretch at 9–55 (ACLLLTLPEDVFAVISRFLSPSDICNLILCGKSLPALVDTEKMWLVQ) folds into the F-box domain. A disordered region spans residues 315 to 337 (TNVLGESSSSKNTTPSQSEIRVS). Residues 321-332 (SSSSKNTTPSQS) are compositionally biased toward low complexity.

In Arabidopsis thaliana (Mouse-ear cress), this protein is Putative F-box protein At5g39480.